Here is an 868-residue protein sequence, read N- to C-terminus: DNA topoisomerase 1 (868 aa).

A Toprim domain is found at 3–148 (KSLVIVESPA…RFSRVVFNEI (146 aa)). E9 and D117 together coordinate Mg(2+). The region spanning 164 to 581 (NMDRVNAQQT…QFFKDFSSQL (418 aa)) is the Topo IA-type catalytic domain. Residues 198 to 203 (SAGRVQ) are interaction with DNA. Catalysis depends on Y325, which acts as the O-(5'-phospho-DNA)-tyrosine intermediate. C4-type zinc fingers lie at residues 605 to 636 (CPTCGRNMAIRTASTGVFLGCTGYALPPKERC), 667 to 694 (CTKCGTAMDSYVIDAHRKIHICGNNPNC), and 716 to 739 (CDKCGADMHLKLGRFGKYMGCTNC).

This sequence belongs to the type IA topoisomerase family. Monomer. Mg(2+) is required as a cofactor.

It catalyses the reaction ATP-independent breakage of single-stranded DNA, followed by passage and rejoining.. Functionally, releases the supercoiling and torsional tension of DNA, which is introduced during the DNA replication and transcription, by transiently cleaving and rejoining one strand of the DNA duplex. Introduces a single-strand break via transesterification at a target site in duplex DNA. The scissile phosphodiester is attacked by the catalytic tyrosine of the enzyme, resulting in the formation of a DNA-(5'-phosphotyrosyl)-enzyme intermediate and the expulsion of a 3'-OH DNA strand. The free DNA strand then undergoes passage around the unbroken strand, thus removing DNA supercoils. Finally, in the religation step, the DNA 3'-OH attacks the covalent intermediate to expel the active-site tyrosine and restore the DNA phosphodiester backbone. The sequence is that of DNA topoisomerase 1 from Haemophilus influenzae (strain ATCC 51907 / DSM 11121 / KW20 / Rd).